Consider the following 128-residue polypeptide: Aspartate 1-decarboxylase (128 aa).

Catalysis depends on Ser25, which acts as the Schiff-base intermediate with substrate; via pyruvic acid. Ser25 is modified (pyruvic acid (Ser)). Thr57 lines the substrate pocket. Tyr58 (proton donor) is an active-site residue. Position 73 to 75 (73 to 75 (GAA)) interacts with substrate.

It belongs to the PanD family. In terms of assembly, heterooctamer of four alpha and four beta subunits. Pyruvate is required as a cofactor. Post-translationally, is synthesized initially as an inactive proenzyme, which is activated by self-cleavage at a specific serine bond to produce a beta-subunit with a hydroxyl group at its C-terminus and an alpha-subunit with a pyruvoyl group at its N-terminus.

The protein resides in the cytoplasm. It carries out the reaction L-aspartate + H(+) = beta-alanine + CO2. It functions in the pathway cofactor biosynthesis; (R)-pantothenate biosynthesis; beta-alanine from L-aspartate: step 1/1. In terms of biological role, catalyzes the pyruvoyl-dependent decarboxylation of aspartate to produce beta-alanine. The chain is Aspartate 1-decarboxylase from Chlorobium luteolum (strain DSM 273 / BCRC 81028 / 2530) (Pelodictyon luteolum).